Consider the following 494-residue polypeptide: 3-octaprenyl-4-hydroxybenzoate carboxy-lyase (494 aa).

N172 serves as a coordination point for Mn(2+). Residues 175 to 177, 189 to 191, and 194 to 195 each bind prenylated FMN; these read IYR, RWL, and RG. Residue E238 participates in Mn(2+) binding. D287 serves as the catalytic Proton donor.

The protein belongs to the UbiD family. As to quaternary structure, homohexamer. The cofactor is prenylated FMN. Mn(2+) serves as cofactor.

Its subcellular location is the cell membrane. It catalyses the reaction a 4-hydroxy-3-(all-trans-polyprenyl)benzoate + H(+) = a 2-(all-trans-polyprenyl)phenol + CO2. It participates in cofactor biosynthesis; ubiquinone biosynthesis. Functionally, catalyzes the decarboxylation of 3-octaprenyl-4-hydroxy benzoate to 2-octaprenylphenol, an intermediate step in ubiquinone biosynthesis. The protein is 3-octaprenyl-4-hydroxybenzoate carboxy-lyase of Citrobacter koseri (strain ATCC BAA-895 / CDC 4225-83 / SGSC4696).